A 1236-amino-acid polypeptide reads, in one-letter code: ABC transporter B family member 9 (1236 aa).

Residues 33 to 320 (MTVGTIAAAG…TSPSLNAFAA (288 aa)) enclose the ABC transmembrane type-1 1 domain. Helical transmembrane passes span 38–58 (IAAA…GQLI), 80–100 (FIYL…CWMV), 158–178 (QLLC…PLLA), 179–199 (GVLC…SLIM), 257–277 (ISGF…GLAV), and 288–308 (GYNG…GMSL). Positions 355–591 (IELKDVYFRY…PEGAYSQLVR (237 aa)) constitute an ABC transporter 1 domain. 390-397 (GQSGSGKS) contributes to the ATP binding site. A glycan (N-linked (GlcNAc...) asparagine) is linked at Asn-542. The segment at 593–616 (QEGSKEEATESERPETSLDVERSG) is disordered. The span at 594–616 (EGSKEEATESERPETSLDVERSG) shows a compositional bias: basic and acidic residues. N-linked (GlcNAc...) asparagine glycosylation is found at Asn-631 and Asn-653. Helical transmembrane passes span 685–705 (VLVL…IFGL), 725–745 (SHFW…MIPV), 785–805 (SLVG…TTGL), 806–826 (IIAF…SPFI), 902–922 (FSFF…AGLI), and 927–947 (ATFG…IGVS). The 273-residue stretch at 686-958 (LVLGSIAAMV…TSAMAPDSNK (273 aa)) folds into the ABC transmembrane type-1 2 domain. Residues 993–1230 (IEFRHVSFRY…SGGAYASLVT (238 aa)) form the ABC transporter 2 domain. An ATP-binding site is contributed by 1028–1035 (GESGSGKS). N-linked (GlcNAc...) asparagine glycosylation is found at Asn-1082 and Asn-1181.

Belongs to the ABC transporter superfamily. ABCB family. Multidrug resistance exporter (TC 3.A.1.201) subfamily.

It is found in the membrane. The chain is ABC transporter B family member 9 (ABCB9) from Arabidopsis thaliana (Mouse-ear cress).